Here is a 414-residue protein sequence, read N- to C-terminus: 3-phosphoshikimate 1-carboxyvinyltransferase (414 aa).

3-phosphoshikimate-binding residues include Lys20, Ser21, and Arg25. Lys20 lines the phosphoenolpyruvate pocket. Arg113 contributes to the phosphoenolpyruvate binding site. 3-phosphoshikimate is bound by residues Ser154, Ser155, Gln156, Ser181, Asp296, and Lys323. Gln156 contributes to the phosphoenolpyruvate binding site. Residue Asp296 is the Proton acceptor of the active site. Arg327, Arg371, and Lys395 together coordinate phosphoenolpyruvate.

This sequence belongs to the EPSP synthase family. As to quaternary structure, monomer.

Its subcellular location is the cytoplasm. The enzyme catalyses 3-phosphoshikimate + phosphoenolpyruvate = 5-O-(1-carboxyvinyl)-3-phosphoshikimate + phosphate. The protein operates within metabolic intermediate biosynthesis; chorismate biosynthesis. Catalyzes the transfer of the enolpyruvyl moiety of phosphoenolpyruvate (PEP) to the 5-hydroxyl of shikimate-3-phosphate (S3P) to produce enolpyruvyl shikimate-3-phosphate and inorganic phosphate. This Saccharolobus solfataricus (strain ATCC 35092 / DSM 1617 / JCM 11322 / P2) (Sulfolobus solfataricus) protein is 3-phosphoshikimate 1-carboxyvinyltransferase.